The chain runs to 229 residues: MSASLARLERKLGYTFKDQDQMVLALTHRSYAGRNNERLEFLGDAILNFVAGEALFERFPQAREGQLSRLRARLVKGETLARLARGFDLGEYLRLGSGELKSGGFRRESILADALEALIGAIYLDADMQTARERVLAWLTDEFESLTLVDTNKDPKTRLQEFLQSRSCELPRYEVVDIQGEPHCRTFFVECEVVLLNNKSRGQGVSRRIAEQVAAAAALIALGVENGND.

Residues 5-127 (LARLERKLGY…LIGAIYLDAD (123 aa)) enclose the RNase III domain. Residue E40 participates in Mg(2+) binding. D44 is a catalytic residue. Positions 113 and 116 each coordinate Mg(2+). Residue E116 is part of the active site. Positions 154–224 (DPKTRLQEFL…AAAALIALGV (71 aa)) constitute a DRBM domain.

Belongs to the ribonuclease III family. As to quaternary structure, homodimer. It depends on Mg(2+) as a cofactor.

It localises to the cytoplasm. It catalyses the reaction Endonucleolytic cleavage to 5'-phosphomonoester.. Digests double-stranded RNA. Involved in the processing of primary rRNA transcript to yield the immediate precursors to the large and small rRNAs (23S and 16S). Processes some mRNAs, and tRNAs when they are encoded in the rRNA operon. Processes pre-crRNA and tracrRNA of type II CRISPR loci if present in the organism. The sequence is that of Ribonuclease 3 from Pseudomonas putida (strain W619).